A 373-amino-acid chain; its full sequence is Quinolinate synthase (373 aa).

2 residues coordinate iminosuccinate: H46 and S63. C109 is a [4Fe-4S] cluster binding site. Iminosuccinate-binding positions include 142 to 144 and S163; that span reads YMN. [4Fe-4S] cluster is bound at residue C232. Residues 258–260 and T275 each bind iminosuccinate; that span reads HPE. C324 contributes to the [4Fe-4S] cluster binding site.

Belongs to the quinolinate synthase family. Type 3 subfamily. Requires [4Fe-4S] cluster as cofactor.

The protein localises to the cytoplasm. It catalyses the reaction iminosuccinate + dihydroxyacetone phosphate = quinolinate + phosphate + 2 H2O + H(+). The protein operates within cofactor biosynthesis; NAD(+) biosynthesis; quinolinate from iminoaspartate: step 1/1. Its function is as follows. Catalyzes the condensation of iminoaspartate with dihydroxyacetone phosphate to form quinolinate. This chain is Quinolinate synthase, found in Acidobacterium capsulatum (strain ATCC 51196 / DSM 11244 / BCRC 80197 / JCM 7670 / NBRC 15755 / NCIMB 13165 / 161).